Reading from the N-terminus, the 118-residue chain is Acidic phospholipase A2 CM-I (118 aa).

7 cysteine pairs are disulfide-bonded: Cys11–Cys70, Cys26–Cys117, Cys28–Cys44, Cys43–Cys98, Cys50–Cys91, Cys59–Cys84, and Cys77–Cys89. Positions 27, 29, and 31 each coordinate Ca(2+). Residue His47 is part of the active site. Asp48 contributes to the Ca(2+) binding site. The active site involves Asp92.

This sequence belongs to the phospholipase A2 family. Group I subfamily. D49 sub-subfamily. Ca(2+) is required as a cofactor. As to expression, expressed by the venom gland.

The protein localises to the secreted. It carries out the reaction a 1,2-diacyl-sn-glycero-3-phosphocholine + H2O = a 1-acyl-sn-glycero-3-phosphocholine + a fatty acid + H(+). Snake venom phospholipase A2 (PLA2) that causes myonecrosis when injected intramuscularly, shows indirect hemolytic activity, abolishes twitches evoked by indirect stimulation earlier than those by direct stimulation (in the mouse phrenic nerve-diaphragm preparation) but does not produce complete neuromuscular block (up to 30 ug/ml) (in the chick biventer cervicis nerve-muscle preparation). PLA2 catalyzes the calcium-dependent hydrolysis of the 2-acyl groups in 3-sn-phosphoglycerides. The polypeptide is Acidic phospholipase A2 CM-I (Naja mossambica (Mozambique spitting cobra)).